The primary structure comprises 497 residues: Gasdermin-E (497 aa).

A membrane targeting domain region spans residues Met1–Val56. Residue Cys45 is modified to S-(2-succinyl)cysteine. Residue Lys120 forms a Glycyl lysine isopeptide (Lys-Gly) (interchain with G-Cter in ubiquitin) linkage. An S-(2-succinyl)cysteine mark is found at Cys156, Cys168, and Cys180. A Glycyl lysine isopeptide (Lys-Gly) (interchain with G-Cter in ubiquitin) cross-link involves residue Lys189. S-(2-succinyl)cysteine is present on residues Cys235, Cys371, Cys409, Cys418, and Cys491.

This sequence belongs to the gasdermin family. As to quaternary structure, homooligomer; homooligomeric ring-shaped pore complex containing 27-28 subunits when inserted in the membrane. Post-translationally, cleavage at Asp-270 by CASP3 (mature and uncleaved precursor forms) or granzyme B (GZMB) relieves autoinhibition and is sufficient to initiate pyroptosis. Succination by the Krebs cycle intermediate fumarate, which leads to S-(2-succinyl)cysteine residues, inhibits processing by caspases, and ability to initiate pyroptosis. Succination modification is catalyzed by a non-enzymatic reaction caused by an accumulation of fumarate. In terms of processing, ubiquitinated on Lys-120 and Lys-189 via 'Lys-48'-linked polyubiquitin chains, leading to proteasomal degradation. Deubiquitinated by USP48, leading to increased stability. Post-translationally, palmitoylated.

It is found in the cell membrane. It localises to the cytoplasm. The protein localises to the cytosol. With respect to regulation, the full-length protein before cleavage is inactive: intramolecular interactions between N- and C-terminal domains mediate autoinhibition in the absence of activation signal. The intrinsic pyroptosis-inducing activity is carried by the released N-terminal moiety (Gasdermin-E, N-terminal) following cleavage by CASP3 or granzyme B (GZMB). Activated by NLRP1 in the absence of GSDMD expression: NLRP1 cleaves and activates CASP8, promoting downstream activation of CASP3 and subsequent activation of GSDME. Functionally, precursor of a pore-forming protein that converts non-inflammatory apoptosis to pyroptosis. This form constitutes the precursor of the pore-forming protein: upon cleavage, the released N-terminal moiety (Gasdermin-E, N-terminal) binds to membranes and forms pores, triggering pyroptosis. Its function is as follows. Pore-forming protein produced by cleavage by CASP3 or granzyme B (GZMB), which converts non-inflammatory apoptosis to pyroptosis or promotes granzyme-mediated pyroptosis, respectively. After cleavage, moves to the plasma membrane, homooligomerizes within the membrane and forms pores of 10-15 nanometers (nm) of inner diameter, allowing the release of mature interleukins (IL1B and IL16) and triggering pyroptosis. Binds to inner leaflet lipids, bisphosphorylated phosphatidylinositols, such as phosphatidylinositol (4,5)-bisphosphate. Cleavage by CASP3 switches CASP3-mediated apoptosis induced by TNF or danger signals, such as chemotherapy drugs, to pyroptosis. Mediates secondary necrosis downstream of the mitochondrial apoptotic pathway and CASP3 activation as well as in response to viral agents. Exhibits bactericidal activity. Cleavage by GZMB promotes tumor suppressor activity by triggering robust anti-tumor immunity. Suppresses tumors by mediating granzyme-mediated pyroptosis in target cells of natural killer (NK) cells: cleavage by granzyme B (GZMB), delivered to target cells from NK-cells, triggers pyroptosis of tumor cells and tumor suppression. May play a role in the p53/TP53-regulated cellular response to DNA damage. The sequence is that of Gasdermin-E from Equus caballus (Horse).